The primary structure comprises 167 residues: 2-C-methyl-D-erythritol 2,4-cyclodiphosphate synthase (167 aa).

Residues aspartate 10 and histidine 12 each contribute to the a divalent metal cation site. 4-CDP-2-C-methyl-D-erythritol 2-phosphate contacts are provided by residues 10-12 (DVH) and 36-37 (HS). Histidine 44 provides a ligand contact to a divalent metal cation. 4-CDP-2-C-methyl-D-erythritol 2-phosphate contacts are provided by residues 58–60 (NIG), 63–67 (FPNTN), 134–137 (TTSE), phenylalanine 141, and arginine 144.

Belongs to the IspF family. As to quaternary structure, homotrimer. Requires a divalent metal cation as cofactor.

The catalysed reaction is 4-CDP-2-C-methyl-D-erythritol 2-phosphate = 2-C-methyl-D-erythritol 2,4-cyclic diphosphate + CMP. It participates in isoprenoid biosynthesis; isopentenyl diphosphate biosynthesis via DXP pathway; isopentenyl diphosphate from 1-deoxy-D-xylulose 5-phosphate: step 4/6. Functionally, involved in the biosynthesis of isopentenyl diphosphate (IPP) and dimethylallyl diphosphate (DMAPP), two major building blocks of isoprenoid compounds. Catalyzes the conversion of 4-diphosphocytidyl-2-C-methyl-D-erythritol 2-phosphate (CDP-ME2P) to 2-C-methyl-D-erythritol 2,4-cyclodiphosphate (ME-CPP) with a corresponding release of cytidine 5-monophosphate (CMP). This is 2-C-methyl-D-erythritol 2,4-cyclodiphosphate synthase from Azobacteroides pseudotrichonymphae genomovar. CFP2.